The sequence spans 106 residues: UPF0060 membrane protein Oant_2511 (106 aa).

A run of 4 helical transmembrane segments spans residues 3 to 23 (FAIY…FWAW), 30 to 50 (PLWL…LTLI), 60 to 80 (AAYG…AEGA), and 84 to 104 (RWDV…LFAP).

It belongs to the UPF0060 family.

Its subcellular location is the cell inner membrane. In Brucella anthropi (strain ATCC 49188 / DSM 6882 / CCUG 24695 / JCM 21032 / LMG 3331 / NBRC 15819 / NCTC 12168 / Alc 37) (Ochrobactrum anthropi), this protein is UPF0060 membrane protein Oant_2511.